The sequence spans 93 residues: Large ribosomal subunit protein uL23cz/uL23cy (93 aa).

It belongs to the universal ribosomal protein uL23 family. In terms of assembly, part of the 50S ribosomal subunit.

Its subcellular location is the plastid. It is found in the chloroplast. Binds to 23S rRNA. The chain is Large ribosomal subunit protein uL23cz/uL23cy (rpl23-A) from Eucalyptus globulus subsp. globulus (Tasmanian blue gum).